We begin with the raw amino-acid sequence, 435 residues long: Adenylosuccinate synthetase (435 aa).

Residues 11-17 (GDEGKGK) and 39-41 (GHT) contribute to the GTP site. D12 (proton acceptor) is an active-site residue. Mg(2+) contacts are provided by D12 and G39. Residues 12-15 (DEGK), 37-40 (NAGH), T128, R142, Q223, T238, and R302 each bind IMP. Catalysis depends on H40, which acts as the Proton donor. 298–304 (SVTGRPR) contacts substrate. GTP is bound by residues R304, 330-332 (KLD), and 412-414 (STG).

The protein belongs to the adenylosuccinate synthetase family. As to quaternary structure, homodimer. Mg(2+) is required as a cofactor.

It localises to the cytoplasm. It catalyses the reaction IMP + L-aspartate + GTP = N(6)-(1,2-dicarboxyethyl)-AMP + GDP + phosphate + 2 H(+). Its pathway is purine metabolism; AMP biosynthesis via de novo pathway; AMP from IMP: step 1/2. In terms of biological role, plays an important role in the de novo pathway of purine nucleotide biosynthesis. Catalyzes the first committed step in the biosynthesis of AMP from IMP. The protein is Adenylosuccinate synthetase of Coxiella burnetii (strain Dugway 5J108-111).